The sequence spans 411 residues: Thyroid hormone receptor beta (411 aa).

The tract at residues Met-1–Glu-24 is disordered. Residues Met-1–Leu-104 form a modulating region. Basic and acidic residues predominate over residues Asp-15–Glu-24. Zn(2+) is bound by residues Cys-105, Cys-108, Cys-122, Cys-125, Cys-143, Cys-149, Cys-159, and Cys-162. NR C4-type zinc fingers lie at residues Cys-105–Cys-125 and Cys-143–Cys-167. The nuclear receptor DNA-binding region spans Cys-105–Asp-179. The 197-residue stretch at Gln-215 to Ser-411 folds into the NR LBD domain. Positions Lys-242–Ser-411 are interaction with NR2F6. 2 residues coordinate 3,3',5-triiodo-L-thyronine: Arg-280 and Asn-329. The L-thyroxine site is built by Arg-280 and Asn-329.

Belongs to the nuclear hormone receptor family. NR1 subfamily. In terms of assembly, binds DNA as a dimer; homodimer and heterodimer with RXRA. Interacts with the coactivators NCOA1/SRC1, NCOA2/GRIP1, NCOA7 and MED1/TRAP220 in a ligand-inducible manner. Interacts with the corepressor NCOR1 in absence of ligand. Interacts with C1D. Interacts with NR2F6; the interaction impairs the binding of the THRB homodimer and THRB:RXRB heterodimer to T3 response elements. Interacts with PRMT2 and THRSP. Interacts with TACC1; this interaction is decreased in the presence of thyroid hormone T3.

It localises to the nucleus. Nuclear hormone receptor that can act as a repressor or activator of transcription. High affinity receptor for thyroid hormones, including triiodothyronine and thyroxine. This chain is Thyroid hormone receptor beta (THRB), found in Ovis aries (Sheep).